The primary structure comprises 508 residues: Purine-cytosine permease fcyB (508 aa).

Topologically, residues 1-72 are cytoplasmic; sequence MAGAFDFDLE…AEQTDTSVFN (72 aa). A helical transmembrane segment spans residues 73–93; that stretch reads IGSMWLAANMVVSSFAIGVLG. At 94–104 the chain is on the extracellular side; sequence KSVYSLGFVDA. A helical transmembrane segment spans residues 105–125; that stretch reads ILTVLFFNLLGIMTVCFFSCF. Residues 126–147 lie on the Cytoplasmic side of the membrane; the sequence is GPFGLRQMVFSRLWFGWYVTKG. Residues 148–168 traverse the membrane as a helical segment; that stretch reads FAVLNILACLGWSAANAIVGA. The Extracellular portion of the chain corresponds to 169–177; that stretch reads QMLHAVNSD. A helical membrane pass occupies residues 178 to 198; sequence VPGFAAILIISICTLLVTFAG. Residues 199 to 200 lie on the Cytoplasmic side of the membrane; that stretch reads YK. A helical membrane pass occupies residues 201-221; that stretch reads VVHLYEYWSWIPTFIVFMIIL. Residues 222-243 lie on the Extracellular side of the membrane; sequence GTFAHSGDFQNIPMGVGTSEMG. The helical transmembrane segment at 244–264 threads the bilayer; the sequence is SVLSFGSAVYGFATGWTSYAA. Residues 265 to 278 are Cytoplasmic-facing; it reads DYTVYQPANRSKRK. The chain crosses the membrane as a helical span at residues 279 to 299; sequence IFLSTWLGLIVPLLFVEMLGV. The Extracellular portion of the chain corresponds to 300–323; it reads AVMTATDIKGSKYDVGYATSGNGG. A helical membrane pass occupies residues 324–344; it reads LIAAVLQPLGGFGDFCLVILA. Residues 345 to 374 are Cytoplasmic-facing; it reads LSIVANNCPNFYSVALTVQVLSRYAQRVPR. A helical membrane pass occupies residues 375 to 395; the sequence is FIWTLFGTGVSIAIAIPGYSH. Residues 396-404 are Extracellular-facing; sequence FETVLENFM. A helical transmembrane segment spans residues 405–425; sequence NFIAYWLAIYSAIAIMDHFVF. At 426–442 the chain is on the cytoplasmic side; that stretch reads KRGFSGYVVENFDKREK. Residues 443 to 463 traverse the membrane as a helical segment; the sequence is LPVGIAATIAFGFGVAGMITG. The Extracellular portion of the chain corresponds to 464-477; sequence MSQPWYVGPIARHA. A helical transmembrane segment spans residues 478 to 498; that stretch reads AGGDVGFELGFAFAAFSYLCL. The Cytoplasmic portion of the chain corresponds to 499-508; the sequence is RPFEIKFFGR.

It belongs to the purine-cytosine permease (2.A.39) family.

Its subcellular location is the cell membrane. Its function is as follows. This permease has a broad specificity towards purines, and also transports cytosine, but neither uracil nor thymine. Contributes very little in purine uptake. Its major role may be the uptake of cytosine. This Emericella nidulans (strain FGSC A4 / ATCC 38163 / CBS 112.46 / NRRL 194 / M139) (Aspergillus nidulans) protein is Purine-cytosine permease fcyB (fcyB).